We begin with the raw amino-acid sequence, 75 residues long: RNA-binding protein KhpA (75 aa).

Residues 29-75 form the KH domain; it reads KVVYHLTVHPDDVGKVIGKNGRIAKAIRTVVYASKTDGNKRIYLDIM.

It belongs to the KhpA RNA-binding protein family. As to quaternary structure, forms a complex with KhpB.

It is found in the cytoplasm. Functionally, a probable RNA chaperone. Forms a complex with KhpB which binds to cellular RNA and controls its expression. Plays a role in peptidoglycan (PG) homeostasis and cell length regulation. The protein is RNA-binding protein KhpA of Oceanobacillus iheyensis (strain DSM 14371 / CIP 107618 / JCM 11309 / KCTC 3954 / HTE831).